The following is a 467-amino-acid chain: Asparagine--tRNA ligase (467 aa).

Belongs to the class-II aminoacyl-tRNA synthetase family. As to quaternary structure, homodimer.

The protein localises to the cytoplasm. It carries out the reaction tRNA(Asn) + L-asparagine + ATP = L-asparaginyl-tRNA(Asn) + AMP + diphosphate + H(+). This Bacteroides fragilis (strain YCH46) protein is Asparagine--tRNA ligase.